The following is a 453-amino-acid chain: 13-hydroxylupanine O-tigloyltransferase (453 aa).

Residues His-166 and Asp-385 each act as proton acceptor in the active site.

Belongs to the plant acyltransferase family. In terms of assembly, monomer. As to expression, expressed in roots and hypocotyls. Detected in seeds, leaves and cotyledons, but not in young developing leaves.

The enzyme catalyses 13-hydroxylupanine + (2E)-2-methylbut-2-enoyl-CoA = 13-(2-methylcrotonoyloxy)lupanine + CoA. With respect to regulation, inhibited by N-ethylmaleimide, p-chloromercuribenzoic acid and diethylpyrocarbonate (DEPC). In terms of biological role, acyl-CoA-dependent acyltransferase involved in the synthesis of lupanine alkaloids. Can use both (-)-13alpha-hydroxymultiflorine and (+)-13alpha-hydroxylupanine as substrates. Lower activity with (-)-3beta, 13alpha-dihydroxylupanine, but no activity with (+)-epilupinine and (-)-lupinine as substrates. Tigloyl-CoA, benzoyl-CoA and, more slowly, acetyl-CoA, propionyl-CoA and 2-butenoyl-CoA can act as acyl donors. The protein is 13-hydroxylupanine O-tigloyltransferase (HMT/HLT) of Lupinus albus (White lupine).